The sequence spans 332 residues: ATPase GET3 (332 aa).

32-39 (KGGVGKTT) contacts ATP. Residue Asp61 is part of the active site. Residues Glu235 and Asn262 each coordinate ATP. Residues Cys273 and Cys276 each contribute to the Zn(2+) site.

It belongs to the arsA ATPase family. In terms of assembly, homodimer.

It localises to the cytoplasm. Its subcellular location is the endoplasmic reticulum. Functionally, ATPase required for the post-translational delivery of tail-anchored (TA) proteins to the endoplasmic reticulum. Recognizes and selectively binds the transmembrane domain of TA proteins in the cytosol. This complex then targets to the endoplasmic reticulum by membrane-bound receptors, where the tail-anchored protein is released for insertion. This process is regulated by ATP binding and hydrolysis. ATP binding drives the homodimer towards the closed dimer state, facilitating recognition of newly synthesized TA membrane proteins. ATP hydrolysis is required for insertion. Subsequently, the homodimer reverts towards the open dimer state, lowering its affinity for the membrane-bound receptor, and returning it to the cytosol to initiate a new round of targeting. In Mycosarcoma maydis (Corn smut fungus), this protein is ATPase GET3.